Consider the following 596-residue polypeptide: Transketolase-like protein 1 (596 aa).

A substrate-binding site is contributed by histidine 46. Thiamine diphosphate contacts are provided by residues serine 49 and 94–96 (GWL). Aspartate 126 serves as a coordination point for Mg(2+). Residues glycine 127 and asparagine 156 each coordinate thiamine diphosphate. 2 residues coordinate Mg(2+): asparagine 156 and leucine 158. Positions 218 and 232 each coordinate thiamine diphosphate. Substrate-binding residues include histidine 232, arginine 292, and serine 319. Residues glutamate 340 and phenylalanine 366 each coordinate thiamine diphosphate. The active-site Proton donor is the glutamate 340. Residues histidine 390 and aspartate 398 each contribute to the substrate site. Residue glutamine 402 participates in thiamine diphosphate binding. Residue arginine 448 participates in substrate binding.

Belongs to the transketolase family. In terms of assembly, homodimer. The cofactor is Mg(2+). Ca(2+) is required as a cofactor. Requires Mn(2+) as cofactor. It depends on Co(2+) as a cofactor. Thiamine diphosphate serves as cofactor. In terms of tissue distribution, widely expressed. Expressed in endothelial cells and in peripheral neurons (at protein level). Not expressed in fetal neocortex. As to expression, expressed in fetal neocortex.

It localises to the cytoplasm. The enzyme catalyses D-sedoheptulose 7-phosphate + D-glyceraldehyde 3-phosphate = aldehydo-D-ribose 5-phosphate + D-xylulose 5-phosphate. Catalyzes the transfer of a two-carbon ketol group from a ketose donor to an aldose acceptor, via a covalent intermediate with the cofactor thiamine pyrophosphate. In terms of biological role, during fetal neocortex development, may be essential to maintain the full number of basal radial glia (bRG). bRG are neural progenitor cells that undergo asymmetric divisions, generating a bRG (self-renewal) and a neuron, in contrast to basal intermediate progenitors (bIPs), which typically divide once to give rise to 2 neurons. bRG generate more cortical neurons over time than bIPs. This Homo sapiens (Human) protein is Transketolase-like protein 1 (TKTL1).